The following is a 407-amino-acid chain: Substance-P receptor (407 aa).

Residues 1–20 (MDNVLPVDSDLFPNTSTNTS) are disordered. Residues 1-31 (MDNVLPVDSDLFPNTSTNTSESNQFVQPTWQ) lie on the Extracellular side of the membrane. Residues asparagine 14 and asparagine 18 are each glycosylated (N-linked (GlcNAc...) asparagine). Residues 32–54 (IVLWAAAYTVIVVTSVVGNVVVI) traverse the membrane as a helical segment. At 55 to 64 (WIILAHKRMR) the chain is on the cytoplasmic side. The helical transmembrane segment at 65–86 (TVTNYFLVNLAFAEACMAAFNT) threads the bilayer. The Extracellular portion of the chain corresponds to 87 to 106 (VVNFTYAVHNVWYYGLFYCK). Residues cysteine 105 and cysteine 180 are joined by a disulfide bond. Residues 107 to 128 (FHNFFPIAALFASIYSMTAVAF) form a helical membrane-spanning segment. Topologically, residues 129–148 (DRYMAIIHPLQPRLSATATK) are cytoplasmic. A helical membrane pass occupies residues 149 to 169 (VVIFVIWVLALLLAFPQGYYS). Over 170–194 (TTETMPSRVVCMIEWPEHPNRTYEK) the chain is Extracellular. Residues 195-219 (AYHICVTVLIYFLPLLVIGYAYTVV) form a helical membrane-spanning segment. Topologically, residues 220–248 (GITLWASEIPGDSSDRYHEQVSAKRKVVK) are cytoplasmic. The chain crosses the membrane as a helical span at residues 249-270 (MMIVVVCTFAICWLPFHIFFLL). Residues 271–283 (PYINPDLYLKKFI) lie on the Extracellular side of the membrane. The chain crosses the membrane as a helical span at residues 284-308 (QQVYLASMWLAMSSTMYNPIIYCCL). At 309-407 (NDRFRLGFKH…SSSFYSNMLA (99 aa)) the chain is on the cytoplasmic side. Residue cysteine 322 is the site of S-palmitoyl cysteine attachment. The segment at 362–407 (VGAHEDEPEEGPKATPSSLDLTSNGSSRSNSKTMTESSSFYSNMLA) is disordered. The span at 376-407 (TPSSLDLTSNGSSRSNSKTMTESSSFYSNMLA) shows a compositional bias: polar residues.

This sequence belongs to the G-protein coupled receptor 1 family. In terms of assembly, interacts with ARRB1.

The protein localises to the cell membrane. In terms of biological role, this is a receptor for the tachykinin neuropeptide substance P. It is probably associated with G proteins that activate a phosphatidylinositol-calcium second messenger system. The rank order of affinity of this receptor to tachykinins is: substance P &gt; substance K &gt; neuromedin K. This is Substance-P receptor (Tacr1) from Mus musculus (Mouse).